Reading from the N-terminus, the 178-residue chain is Large ribosomal subunit protein bL25 (178 aa).

Belongs to the bacterial ribosomal protein bL25 family. CTC subfamily. In terms of assembly, part of the 50S ribosomal subunit; part of the 5S rRNA/L5/L18/L25 subcomplex. Contacts the 5S rRNA. Binds to the 5S rRNA independently of L5 and L18.

Its function is as follows. This is one of the proteins that binds to the 5S RNA in the ribosome where it forms part of the central protuberance. The chain is Large ribosomal subunit protein bL25 from Helicobacter pylori (strain G27).